We begin with the raw amino-acid sequence, 190 residues long: dTTP/UTP pyrophosphatase (190 aa).

Aspartate 68 serves as the catalytic Proton acceptor.

This sequence belongs to the Maf family. YhdE subfamily. A divalent metal cation is required as a cofactor.

It is found in the cytoplasm. The catalysed reaction is dTTP + H2O = dTMP + diphosphate + H(+). The enzyme catalyses UTP + H2O = UMP + diphosphate + H(+). Functionally, nucleoside triphosphate pyrophosphatase that hydrolyzes dTTP and UTP. May have a dual role in cell division arrest and in preventing the incorporation of modified nucleotides into cellular nucleic acids. This Acholeplasma laidlawii (strain PG-8A) protein is dTTP/UTP pyrophosphatase.